The primary structure comprises 136 residues: Large ribosomal subunit protein eL27B (136 aa).

Belongs to the eukaryotic ribosomal protein eL27 family. Component of the large ribosomal subunit (LSU). Mature yeast ribosomes consist of a small (40S) and a large (60S) subunit. The 40S small subunit contains 1 molecule of ribosomal RNA (18S rRNA) and at least 33 different proteins. The large 60S subunit contains 3 rRNA molecules (25S, 5.8S and 5S rRNA) and at least 46 different proteins.

The protein localises to the cytoplasm. Component of the ribosome, a large ribonucleoprotein complex responsible for the synthesis of proteins in the cell. The small ribosomal subunit (SSU) binds messenger RNAs (mRNAs) and translates the encoded message by selecting cognate aminoacyl-transfer RNA (tRNA) molecules. The large subunit (LSU) contains the ribosomal catalytic site termed the peptidyl transferase center (PTC), which catalyzes the formation of peptide bonds, thereby polymerizing the amino acids delivered by tRNAs into a polypeptide chain. The nascent polypeptides leave the ribosome through a tunnel in the LSU and interact with protein factors that function in enzymatic processing, targeting, and the membrane insertion of nascent chains at the exit of the ribosomal tunnel. The chain is Large ribosomal subunit protein eL27B (rpl2702) from Schizosaccharomyces pombe (strain 972 / ATCC 24843) (Fission yeast).